Reading from the N-terminus, the 432-residue chain is Enolase (432 aa).

Q167 contacts (2R)-2-phosphoglycerate. Catalysis depends on E209, which acts as the Proton donor. Mg(2+) is bound by residues D246, E290, and D317. 4 residues coordinate (2R)-2-phosphoglycerate: K342, R371, S372, and K393. The Proton acceptor role is filled by K342.

The protein belongs to the enolase family. As to quaternary structure, component of the RNA degradosome, a multiprotein complex involved in RNA processing and mRNA degradation. Requires Mg(2+) as cofactor.

It is found in the cytoplasm. Its subcellular location is the secreted. It localises to the cell surface. It carries out the reaction (2R)-2-phosphoglycerate = phosphoenolpyruvate + H2O. It functions in the pathway carbohydrate degradation; glycolysis; pyruvate from D-glyceraldehyde 3-phosphate: step 4/5. Its function is as follows. Catalyzes the reversible conversion of 2-phosphoglycerate (2-PG) into phosphoenolpyruvate (PEP). It is essential for the degradation of carbohydrates via glycolysis. The chain is Enolase from Klebsiella pneumoniae subsp. pneumoniae (strain ATCC 700721 / MGH 78578).